The following is a 422-amino-acid chain: Oxysterol-binding protein 7 (422 aa).

The disordered stretch occupies residues 283–313 (EAAPASSASKKEKKKEKKKAKHSKHTCSPSD). A compositionally biased stretch (basic residues) spans 293-307 (KEKKKEKKKAKHSKH). Residues 354 to 384 (MQAADQIKKEIEDEQRKRLQITKEEEKKERA) are a coiled coil. The interval 402 to 422 (TLAPVSNSTSSTASDAASGSN) is disordered. Residues 407 to 422 (SNSTSSTASDAASGSN) are compositionally biased toward low complexity.

It belongs to the OSBP family.

This is Oxysterol-binding protein 7 (osbG) from Dictyostelium discoideum (Social amoeba).